Reading from the N-terminus, the 306-residue chain is Homoserine kinase (306 aa).

ATP is bound at residue proline 95–alanine 105.

Belongs to the GHMP kinase family. Homoserine kinase subfamily.

The protein localises to the cytoplasm. It carries out the reaction L-homoserine + ATP = O-phospho-L-homoserine + ADP + H(+). It participates in amino-acid biosynthesis; L-threonine biosynthesis; L-threonine from L-aspartate: step 4/5. Catalyzes the ATP-dependent phosphorylation of L-homoserine to L-homoserine phosphate. This is Homoserine kinase from Mycobacteroides abscessus (strain ATCC 19977 / DSM 44196 / CCUG 20993 / CIP 104536 / JCM 13569 / NCTC 13031 / TMC 1543 / L948) (Mycobacterium abscessus).